The sequence spans 441 residues: Methylenetetrahydrofolate--tRNA-(uracil-5-)-methyltransferase TrmFO (441 aa).

An FAD-binding site is contributed by 11–16 (GAGLAG).

The protein belongs to the MnmG family. TrmFO subfamily. FAD is required as a cofactor.

The protein localises to the cytoplasm. The enzyme catalyses uridine(54) in tRNA + (6R)-5,10-methylene-5,6,7,8-tetrahydrofolate + NADH + H(+) = 5-methyluridine(54) in tRNA + (6S)-5,6,7,8-tetrahydrofolate + NAD(+). It carries out the reaction uridine(54) in tRNA + (6R)-5,10-methylene-5,6,7,8-tetrahydrofolate + NADPH + H(+) = 5-methyluridine(54) in tRNA + (6S)-5,6,7,8-tetrahydrofolate + NADP(+). In terms of biological role, catalyzes the folate-dependent formation of 5-methyl-uridine at position 54 (M-5-U54) in all tRNAs. The chain is Methylenetetrahydrofolate--tRNA-(uracil-5-)-methyltransferase TrmFO from Lactiplantibacillus plantarum (strain ATCC BAA-793 / NCIMB 8826 / WCFS1) (Lactobacillus plantarum).